A 549-amino-acid polypeptide reads, in one-letter code: Chaperonin GroEL 2 (549 aa).

Residues 29–32, Lys-50, 86–90, Gly-414, 477–479, and Asp-493 contribute to the ATP site; these read TLGP, DGTTT, and NAA.

This sequence belongs to the chaperonin (HSP60) family. As to quaternary structure, forms a cylinder of 14 subunits composed of two heptameric rings stacked back-to-back. Interacts with the co-chaperonin GroES.

It is found in the cytoplasm. It carries out the reaction ATP + H2O + a folded polypeptide = ADP + phosphate + an unfolded polypeptide.. Together with its co-chaperonin GroES, plays an essential role in assisting protein folding. The GroEL-GroES system forms a nano-cage that allows encapsulation of the non-native substrate proteins and provides a physical environment optimized to promote and accelerate protein folding. This Myxococcus xanthus (strain DK1622) protein is Chaperonin GroEL 2.